Here is a 363-residue protein sequence, read N- to C-terminus: Biotin synthase (363 aa).

A phosphoserine mark is found at serine 13, serine 14, and serine 17. Positions 54-276 constitute a Radical SAM core domain; it reads KKVQQCTLLS…IATARICMPK (223 aa). Residues cysteine 69, cysteine 73, and cysteine 76 each contribute to the [4Fe-4S] cluster site. 4 residues coordinate [2Fe-2S] cluster: cysteine 113, cysteine 146, cysteine 206, and arginine 280. The interval 337 to 363 is disordered; it reads EYGTSTEGEDGTFTLPPKERLAPSPSL.

This sequence belongs to the radical SAM superfamily. Biotin synthase family. Requires [4Fe-4S] cluster as cofactor. It depends on [2Fe-2S] cluster as a cofactor.

The catalysed reaction is (4R,5S)-dethiobiotin + (sulfur carrier)-SH + 2 reduced [2Fe-2S]-[ferredoxin] + 2 S-adenosyl-L-methionine = (sulfur carrier)-H + biotin + 2 5'-deoxyadenosine + 2 L-methionine + 2 oxidized [2Fe-2S]-[ferredoxin]. It participates in cofactor biosynthesis; biotin biosynthesis; biotin from 7,8-diaminononanoate: step 2/2. Functionally, catalyzes the last step of biotin biosynthesis, the conversion of dethiobiotin to biotin. In Schizosaccharomyces pombe (strain 972 / ATCC 24843) (Fission yeast), this protein is Biotin synthase (bio2).